Here is a 177-residue protein sequence, read N- to C-terminus: Large ribosomal subunit protein uL6 (177 aa).

This sequence belongs to the universal ribosomal protein uL6 family. Part of the 50S ribosomal subunit.

This protein binds to the 23S rRNA, and is important in its secondary structure. It is located near the subunit interface in the base of the L7/L12 stalk, and near the tRNA binding site of the peptidyltransferase center. This Shewanella baltica (strain OS223) protein is Large ribosomal subunit protein uL6.